We begin with the raw amino-acid sequence, 101 residues long: PAT complex subunit Asterix (101 aa).

Positions 1–26 (MADPRRPARVTRYKPPTTESNPALED) are disordered. At 1–27 (MADPRRPARVTRYKPPTTESNPALEDP) the chain is on the cytoplasmic side. The helical transmembrane segment at 28-46 (TPDYMNLLGMVFSMCGLML) threads the bilayer. Lys-47 is a topological domain (lumenal). The helical transmembrane segment at 48 to 65 (LKWCAWIAVYCSFISFAN) threads the bilayer. The Cytoplasmic portion of the chain corresponds to 66–69 (SRSS). Residues 70 to 90 (EDTKQMMSSFMLSISAVVMSY) form a helical membrane-spanning segment. Topologically, residues 91 to 101 (LQNPQPMSPPW) are lumenal.

It belongs to the Asterix family. Component of the multi-pass translocon (MPT) complex.

It is found in the endoplasmic reticulum membrane. Functionally, component of the multi-pass translocon (MPT) complex that mediates insertion of multi-pass membrane proteins into the lipid bilayer of membranes. The MPT complex takes over after the SEC61 complex: following membrane insertion of the first few transmembrane segments of proteins by the SEC61 complex, the MPT complex occludes the lateral gate of the SEC61 complex to promote insertion of subsequent transmembrane regions. This chain is PAT complex subunit Asterix (WDR83OS), found in Gallus gallus (Chicken).